A 113-amino-acid polypeptide reads, in one-letter code: Protein FMC1 homolog (113 aa).

The disordered stretch occupies residues 94–113; sequence SAGLVGLKLPHQPGGKGWEP.

This sequence belongs to the FMC1 family. Interacts with ATPAF2.

It localises to the mitochondrion. Functionally, plays a role in the assembly/stability of the mitochondrial membrane ATP synthase (F(1)F(0) ATP synthase or Complex V). This chain is Protein FMC1 homolog, found in Homo sapiens (Human).